Here is a 220-residue protein sequence, read N- to C-terminus: Probable glutathione S-transferase parA (220 aa).

Residues 4–83 (NNVVLLDFWP…YIDEVWHDKC (80 aa)) enclose the GST N-terminal domain. Residues Ser-14, Lys-41, Ile-55, and 67–68 (ES) contribute to the glutathione site. Positions 89 to 209 (DPYERSQARF…LPHPHKIYGF (121 aa)) constitute a GST C-terminal domain.

The protein belongs to the GST superfamily. HSP26 family.

It catalyses the reaction RX + glutathione = an S-substituted glutathione + a halide anion + H(+). The protein is Probable glutathione S-transferase parA (PARA) of Nicotiana tabacum (Common tobacco).